Reading from the N-terminus, the 239-residue chain is Ribosomal RNA small subunit methyltransferase G (239 aa).

S-adenosyl-L-methionine contacts are provided by residues Gly-77, Phe-82, 128 to 129, and Arg-146; that span reads AE. A disordered region spans residues 216–239; the sequence is KRRQTSKKYPRKPGTPNKSPLVES.

The protein belongs to the methyltransferase superfamily. RNA methyltransferase RsmG family.

The protein localises to the cytoplasm. Functionally, specifically methylates the N7 position of guanine in position 535 of 16S rRNA. This Staphylococcus epidermidis (strain ATCC 35984 / DSM 28319 / BCRC 17069 / CCUG 31568 / BM 3577 / RP62A) protein is Ribosomal RNA small subunit methyltransferase G.